The sequence spans 404 residues: Floricaula/leafy-like protein FL1 (404 aa).

The segment at 210–251 is disordered; it reads IGVPEHSSESDERKADTNKQKRRRSKEPGEDGEDRPREHPFI. Basic and acidic residues-rich tracts occupy residues 215–228 and 235–249; these read HSSESDERKADTNK and KEPGEDGEDRPREHP. 3 consecutive DNA-binding regions follow at residues 246–250, 315–322, and 386–389; these read REHPF, NKPKMRHY, and YVPT.

Belongs to the FLO/LFY family. As to expression, expressed in both male and female cones, vegetative buds and needles, but not in the roots.

Its subcellular location is the nucleus. Functionally, probable transcription factor. This Pinus radiata (Monterey pine) protein is Floricaula/leafy-like protein FL1.